The following is a 277-amino-acid chain: GPALPP motifs-containing protein 1 (277 aa).

Residues 1–240 (MARDLIGPAL…VWTDTPADRE (240 aa)) are disordered. Ala-2 carries the N-acetylalanine modification. The GPALPP motif 1 signature appears at 7-12 (GPALPP). At Ser-28 the chain carries Phosphoserine. A GPALPP motif 2 motif is present at residues 32-37 (GPALPP). 2 stretches are compositionally biased toward acidic residues: residues 60–69 (GNQESEEDDT) and 81–90 (DDDDDDDDEG). Positions 93–98 (GPALPP) match the GPALPP motif 3 motif. At Ser-106 the chain carries Phosphoserine. Residues 108–117 (PRPMIGPALP) show a composition bias toward pro residues. The short motif at 113–118 (GPALPP) is the GPALPP motif 4 element. A phosphoserine mark is found at Ser-138 and Ser-143. Phosphothreonine is present on Thr-147. Residues Ser-149 and Ser-150 each carry the phosphoserine modification. Residues 172–196 (EFEKRAQRMKEKLTKGDDDSSKPIT) show a composition bias toward basic and acidic residues.

The protein is GPALPP motifs-containing protein 1 (GPALPP1) of Bos taurus (Bovine).